A 371-amino-acid chain; its full sequence is Vasopressin V2 receptor (371 aa).

The interval methionine 1–glutamate 27 is disordered. Over methionine 1–arginine 38 the chain is Extracellular. Low complexity predominate over residues serine 15–serine 24. N-linked (GlcNAc...) asparagine glycosylation is present at asparagine 22. The chain crosses the membrane as a helical span at residues alanine 39–isoleucine 63. The Cytoplasmic portion of the chain corresponds to arginine 64–phenylalanine 77. The helical transmembrane segment at isoleucine 78–alanine 98 threads the bilayer. The Extracellular portion of the chain corresponds to tryptophan 99–arginine 113. The helical transmembrane segment at alanine 114 to leucine 135 threads the bilayer. Topologically, residues aspartate 136–proline 159 are cytoplasmic. The chain crosses the membrane as a helical span at residues valine 160 to glutamine 180. Topologically, residues arginine 181–tryptophan 200 are extracellular. An N-linked (GlcNAc...) asparagine glycan is attached at asparagine 185. A helical membrane pass occupies residues glycine 201–glycine 220. Residues isoleucine 221–arginine 271 lie on the Cytoplasmic side of the membrane. The interval proline 240–glycine 259 is disordered. The helical transmembrane segment at methionine 272–tryptophan 293 threads the bilayer. At alanine 294–valine 308 the chain is on the extracellular side. The helical transmembrane segment at leucine 309 to phenylalanine 328 threads the bilayer. The Cytoplasmic segment spans residues serine 329–serine 371. 2 S-palmitoyl cysteine lipidation sites follow: cysteine 341 and cysteine 342. The tract at residues histidine 349–serine 371 is disordered. A compositionally biased stretch (polar residues) spans serine 357–serine 371.

This sequence belongs to the G-protein coupled receptor 1 family. Vasopressin/oxytocin receptor subfamily. Interacts with ARRDC4. Identified in a complex containing at least ARRDC4, V2R and HGS. Interacts with TMEM147. Highly expressed in kidney (at protein level) and moderately expressed in liver (at protein level). No or extremely low expression in left ventricule, muscle, bone and brain (at protein level).

It is found in the cell membrane. In terms of biological role, receptor for arginine vasopressin. The activity of this receptor is mediated by G proteins which activate adenylate cyclase. Involved in renal water reabsorption. This is Vasopressin V2 receptor (Avpr2) from Mus musculus (Mouse).